A 455-amino-acid polypeptide reads, in one-letter code: Pentatricopeptide repeat-containing protein At3g26630, chloroplastic (455 aa).

The N-terminal 19 residues, 1 to 19, are a transit peptide targeting the chloroplast; it reads MAAPSPSSPPNLLSPPPFR. PPR repeat units lie at residues 51–81, 82–117, 118–152, 153–187, 188–214, 215–249, 250–284, 285–315, 316–350, 352–387, and 388–418; these read DQLLVRQLISVSSSFGETQYASLVFNQLQSP, STFTWNLMIRSLSVNHKPREALLLFILMMISHQSQF, DKFTFPFVIKACLASSSIRLGTQVHGLAIKAGFFN, DVFFQNTLMDLYFKCGKPDSGRKVFDKMPGRSIVS, WTTMLYGLVSNSQLDSAEIVFNQMPMR, NVVSWTAMITAYVKNRRPDEAFQLFRRMQVDDVKP, NEFTIVNLLQASTQLGSLSMGRWVHDYAHKNGFVL, DCFLGTALIDMYSKCGSLQDARKVFDVMQGK, SLATWNSMITSLGVHGCGEEALSLFEEMEEEASVE, DAITFVGVLSACANTGNVKDGLRYFTRMIQVYGISP, and IREHNACMIQLLEQALEVEKASNLVESMDSD.

The protein belongs to the PPR family. PCMP-A subfamily.

It localises to the plastid. The protein localises to the chloroplast. The chain is Pentatricopeptide repeat-containing protein At3g26630, chloroplastic (PCMP-A6) from Arabidopsis thaliana (Mouse-ear cress).